A 204-amino-acid polypeptide reads, in one-letter code: NADH-quinone oxidoreductase subunit C (204 aa).

This sequence belongs to the complex I 30 kDa subunit family. In terms of assembly, NDH-1 is composed of 14 different subunits. Subunits NuoB, C, D, E, F, and G constitute the peripheral sector of the complex.

It is found in the cell inner membrane. The catalysed reaction is a quinone + NADH + 5 H(+)(in) = a quinol + NAD(+) + 4 H(+)(out). Functionally, NDH-1 shuttles electrons from NADH, via FMN and iron-sulfur (Fe-S) centers, to quinones in the respiratory chain. The immediate electron acceptor for the enzyme in this species is believed to be ubiquinone. Couples the redox reaction to proton translocation (for every two electrons transferred, four hydrogen ions are translocated across the cytoplasmic membrane), and thus conserves the redox energy in a proton gradient. This chain is NADH-quinone oxidoreductase subunit C, found in Vesicomyosocius okutanii subsp. Calyptogena okutanii (strain HA).